The chain runs to 492 residues: Trehalose-6-phosphate synthase (492 aa).

Position 25 (Arg25) interacts with D-glucose 6-phosphate. UDP-alpha-D-glucose is bound at residue 45–46 (GG). Residues Tyr101 and Asp155 each coordinate D-glucose 6-phosphate. 2 residues coordinate UDP-alpha-D-glucose: Arg297 and Lys302. D-glucose 6-phosphate is bound at residue Arg335. Residue 400–404 (LVAKE) participates in UDP-alpha-D-glucose binding.

It belongs to the glycosyltransferase 20 family. As to quaternary structure, homotetramer.

The enzyme catalyses ADP-alpha-D-glucose + D-glucose 6-phosphate = alpha,alpha-trehalose 6-phosphate + ADP + H(+). It catalyses the reaction CDP-alpha-D-glucose + D-glucose 6-phosphate = alpha,alpha-trehalose 6-phosphate + CDP + H(+). It carries out the reaction GDP-alpha-D-glucose + D-glucose 6-phosphate = alpha,alpha-trehalose 6-phosphate + GDP + H(+). The catalysed reaction is TDP-alpha-D-glucose + D-glucose 6-phosphate = 5-methyl-UDP + alpha,alpha-trehalose 6-phosphate + H(+). The enzyme catalyses D-glucose 6-phosphate + UDP-alpha-D-glucose = alpha,alpha-trehalose 6-phosphate + UDP + H(+). Its pathway is glycan biosynthesis; trehalose biosynthesis. Probably involved in the osmoprotection via the biosynthesis of trehalose and in the production of glycogen and alpha-glucan via the TreS-Pep2 branch involved in the biosynthesis of maltose-1-phosphate (M1P). Catalyzes the transfer of glucose from UDP-glucose (UDP-Glc) to D-glucose 6-phosphate (Glc-6-P) to form trehalose-6-phosphate. Probably also able to use ADP-Glc, CDP-Glc, GDP-Glc and TDP-Glc as glucosyl donors. The chain is Trehalose-6-phosphate synthase from Mycolicibacterium paratuberculosis (strain ATCC BAA-968 / K-10) (Mycobacterium paratuberculosis).